The primary structure comprises 280 residues: Borealin (280 aa).

The required for interaction with INCENP stretch occupies residues 1-58 (MAPRKGSSRVAKTNSLRRRKLASFLKDFDREVEIRIKQIESDRQNLLKEVDNLYNIEI). The tract at residues 1–88 (MAPRKGSSRV…NKQALEEAAT (88 aa)) is required for centromere localization. A required for interaction with SENP3 region spans residues 1 to 140 (MAPRKGSSRV…ENERKNLQTA (140 aa)). The tract at residues 10-109 (VAKTNSLRRR…TAEAIQTPLK (100 aa)) is required to form a minimal CPC core complex that localizes to the central spindle and midbody and properly executes the role of the CPC during cytokinesis. The interval 20–78 (KLASFLKDFDREVEIRIKQIESDRQNLLKEVDNLYNIEILRLPKALREMNWLDYFALGG) is required for interaction with INCENP and BIRC5. Phosphothreonine; by TTK is present on residues threonine 88 and threonine 94. Threonine 106 carries the post-translational modification Phosphothreonine. Serine 110 bears the Phosphoserine mark. The tract at residues 130 to 169 (EENERKNLQTARVKRCPPSKKRTQSIQGKGKGKRSSRANT) is disordered. Lysine 135 is covalently cross-linked (Glycyl lysine isopeptide (Lys-Gly) (interchain with G-Cter in SUMO2)). A compositionally biased stretch (basic residues) spans 141–152 (RVKRCPPSKKRT). Serine 165 bears the Phosphoserine; by AURKB mark. Threonine 169 bears the Phosphothreonine; by TTK mark. 2 positions are modified to phosphothreonine: threonine 189 and threonine 204. Residues serine 219 and serine 224 each carry the phosphoserine modification. The residue at position 230 (threonine 230) is a Phosphothreonine; by TTK. A phosphoserine mark is found at serine 238 and serine 244.

Belongs to the borealin family. As to quaternary structure, may form homooligomers and homodimers. Component of the chromosomal passenger complex (CPC) composed of at least BIRC5/survivin, CDCA8/borealin, INCENP, AURKB or AURKC; in the complex forms a triple-helix bundle-based subcomplex with INCENP and BIRC5. Interacts with SENP3, UBE2I and RANBP2. Interacts (phosphorylated) with SGO1 and SGO2; the association is dependent on CDK1. Phosphorylated by TTK, essentially at Thr-88, Thr94, Thr-169 and Thr-230. Phosphorylation (probably by CDK1) promotes targeting of the CPC to centromeric DNA. In terms of processing, sumoylated by UBE2I and RANBP2. Desumoylated by SENP3 through the removal of SUMO2 and SUMO3.

It is found in the nucleus. The protein localises to the nucleolus. It localises to the cytoplasm. The protein resides in the chromosome. Its subcellular location is the centromere. It is found in the cytoskeleton. The protein localises to the spindle. Functionally, component of the chromosomal passenger complex (CPC), a complex that acts as a key regulator of mitosis. The CPC complex has essential functions at the centromere in ensuring correct chromosome alignment and segregation and is required for chromatin-induced microtubule stabilization and spindle assembly. In the complex, it may be required to direct the CPC to centromeric DNA. This Pongo abelii (Sumatran orangutan) protein is Borealin (CDCA8).